The primary structure comprises 453 residues: Pentatricopeptide repeat-containing protein At2g38420, mitochondrial (453 aa).

A mitochondrion-targeting transit peptide spans 1–77; that stretch reads MARSSSWHRM…CEPTPQAYRF (77 aa). 9 PPR repeats span residues 107–141, 142–177, 178–212, 213–249, 250–284, 285–319, 320–354, 355–389, and 390–424; these read PESI…RCVP, SAYT…GVRL, EEST…SVIV, DPRL…RFSP, GLRD…RVEP, DLVC…GLAP, DVYT…GSEP, NVVT…GVNR, and NSHT…NVFV.

The protein belongs to the PPR family. P subfamily.

The protein resides in the mitochondrion. The polypeptide is Pentatricopeptide repeat-containing protein At2g38420, mitochondrial (Arabidopsis thaliana (Mouse-ear cress)).